A 554-amino-acid polypeptide reads, in one-letter code: Glucose-6-phosphate isomerase (554 aa).

The Proton donor role is filled by glutamate 358. Catalysis depends on residues histidine 389 and lysine 515. A compositionally biased stretch (polar residues) spans 527-540 (SDGSPQRQSDSSTD). The segment at 527–554 (SDGSPQRQSDSSTDALVRRYRTQRGRTG) is disordered. Over residues 544-554 (RRYRTQRGRTG) the composition is skewed to basic residues.

The protein belongs to the GPI family.

Its subcellular location is the cytoplasm. It carries out the reaction alpha-D-glucose 6-phosphate = beta-D-fructose 6-phosphate. The protein operates within carbohydrate biosynthesis; gluconeogenesis. It participates in carbohydrate degradation; glycolysis; D-glyceraldehyde 3-phosphate and glycerone phosphate from D-glucose: step 2/4. Catalyzes the reversible isomerization of glucose-6-phosphate to fructose-6-phosphate. This chain is Glucose-6-phosphate isomerase, found in Mycobacterium ulcerans (strain Agy99).